Consider the following 1048-residue polypeptide: MDPVVKKPSPGGVQHRVTKGLRAIVGHACRHPIHTLLVTALTAATTHLHVLEGTYQAAHRGLAPWAKETPLNVQSFLCGSRTVTLGEASAWRWQIDDRPKVSEDGQSDFHWALVTLDLPGASVDASIPFLSNTLSEFLGAEQITPTPDSSPSPDHSALTFRVPYSQLDGFLQAVEIIPSEKEDDSWRLRSPREEGSPTSLGHWVGSSWLSFLHRVKHAETVDLVIIGLSYLAMNMTVVSLFRVMRQLGSRFWLATSVLLSGAFAFVLGLGITTTCDVPVDMLLLFEGIPYLVLTVGFEKPIQLTRAVLCVSEELRGGWQRPVPNGASSDDSRQSQLIPNIIQLAVDREGWYIVRSYLLEIGALALGAVLRPNDSLGHFCFLAAWTLLIDAILLFTFYATILCVKLEITRIRSPGGLGQVNAKHPSGIFGHKVKSTNITWWKLLTVGGFVLCHFLQLSPFFYRVMGEYMANGTLPPTAVSPFKEAANGLNEIYLTARVEGFETRVTVLPPLQYALESAGFNISATKRSTFDGVLDGLESPLGRLCLMGALVVSLVLNNHLIHAARWHAWPQARESAVPDGSSLSVPCSATAPEVCTRPPEETEALLKSNQAESLTDDELVELCLRGKIAGYSLEKTLERIAAGSSCSVTRLDAFTRAVRIRRAAVSKTPSTQNLCSGLAESLLPYRDYNYELVHGACCENVVGYLPLPLGVAGPMVIDGQALFIPMATTEGVLVASASRGCKAINAGGGATTMLKGDGMTRGPCLRFPSAQRAAEAQRWVESPLGHEVLAAAFNATSRFARLQTLTVAQAGIYLYIRFRTTTGDAMGMNMISKGVEKALEAMAAEGGFPDMHTVTLSGNFCSDKKSAAINWIGGRGKSVIAEATIPAETVRQVLKTDVDALVELNTAKNLVGSAMAGSLGGFNAHASNLVQAVFLATGQDPAQNVESSSCITTMKNIDGNLHIAVSMPSMEVGTIGGGTILEAQGAMLDLLGVRGAHATEPGANARRLARIVAAAVLAGELSTCAALAAGHLVNAHMQHNRSAGATVKK.

Over 1-32 (MDPVVKKPSPGGVQHRVTKGLRAIVGHACRHP) the chain is Cytoplasmic. Residues 33 to 53 (IHTLLVTALTAATTHLHVLEG) traverse the membrane as a helical segment. The Lumenal portion of the chain corresponds to 54 to 220 (TYQAAHRGLA…FLHRVKHAET (167 aa)). A helical membrane pass occupies residues 221–241 (VDLVIIGLSYLAMNMTVVSLF). Residues 222 to 403 (DLVIIGLSYL…FTFYATILCV (182 aa)) form the SSD domain. The Cytoplasmic portion of the chain corresponds to 242-250 (RVMRQLGSR). A helical transmembrane segment spans residues 251–271 (FWLATSVLLSGAFAFVLGLGI). At 272–276 (TTTCD) the chain is on the lumenal side. A helical transmembrane segment spans residues 277–297 (VPVDMLLLFEGIPYLVLTVGF). Residues 298–348 (EKPIQLTRAVLCVSEELRGGWQRPVPNGASSDDSRQSQLIPNIIQLAVDRE) are Cytoplasmic-facing. The helical transmembrane segment at 349–369 (GWYIVRSYLLEIGALALGAVL) threads the bilayer. At 370-377 (RPNDSLGH) the chain is on the lumenal side. A glycan (N-linked (GlcNAc...) asparagine) is linked at Asn-372. The helical transmembrane segment at 378–398 (FCFLAAWTLLIDAILLFTFYA) threads the bilayer. Over 399–439 (TILCVKLEITRIRSPGGLGQVNAKHPSGIFGHKVKSTNITW) the chain is Cytoplasmic. A helical transmembrane segment spans residues 440–460 (WKLLTVGGFVLCHFLQLSPFF). Residues 461–542 (YRVMGEYMAN…LDGLESPLGR (82 aa)) are Lumenal-facing. Asn-470 and Asn-520 each carry an N-linked (GlcNAc...) asparagine glycan. Residues 543 to 563 (LCLMGALVVSLVLNNHLIHAA) traverse the membrane as a helical segment. The Cytoplasmic portion of the chain corresponds to 564–1048 (RWHAWPQARE…NRSAGATVKK (485 aa)). The active-site Charge relay system is the Glu-729. 735–741 (SASRGCK) provides a ligand contact to CoA. NADP(+)-binding positions include 796–798 (SRF) and 823–831 (DAMGMNMIS). Catalysis depends on Lys-863, which acts as the Charge relay system. Position 892 to 894 (892 to 894 (VLK)) interacts with CoA. Asp-939 acts as the Charge relay system in catalysis. Position 1034 to 1035 (1034 to 1035 (AH)) interacts with CoA. His-1035 serves as the catalytic Proton donor. 1039-1040 (NR) lines the NADP(+) pocket.

It belongs to the HMG-CoA reductase family.

The protein localises to the endoplasmic reticulum membrane. The enzyme catalyses (R)-mevalonate + 2 NADP(+) + CoA = (3S)-3-hydroxy-3-methylglutaryl-CoA + 2 NADPH + 2 H(+). It functions in the pathway metabolic intermediate biosynthesis; (R)-mevalonate biosynthesis; (R)-mevalonate from acetyl-CoA: step 3/3. Functionally, HMG-CoA reductase; part of the first module of ergosterol biosynthesis pathway that includes the early steps of the pathway, conserved across all eukaryotes, and which results in the formation of mevalonate from acetyl-coenzyme A (acetyl-CoA). In this module, the cytosolic acetyl-CoA acetyltransferase catalyzes the formation of acetoacetyl-CoA. The hydroxymethylglutaryl-CoA synthase then condenses acetyl-CoA with acetoacetyl-CoA to form HMG-CoA. The rate-limiting step of the early module is the reduction to mevalonate by the 3-hydroxy-3-methylglutaryl-coenzyme A (HMG-CoA) reductase. The protein is 3-hydroxy-3-methylglutaryl-coenzyme A reductase of Aspergillus terreus (strain NIH 2624 / FGSC A1156).